The primary structure comprises 125 residues: RutC family protein aq_364 (125 aa).

It belongs to the RutC family.

This is RutC family protein aq_364 from Aquifex aeolicus (strain VF5).